The following is an 89-amino-acid chain: Small ribosomal subunit protein uS15 (89 aa).

The protein belongs to the universal ribosomal protein uS15 family. Part of the 30S ribosomal subunit. Forms a bridge to the 50S subunit in the 70S ribosome, contacting the 23S rRNA.

One of the primary rRNA binding proteins, it binds directly to 16S rRNA where it helps nucleate assembly of the platform of the 30S subunit by binding and bridging several RNA helices of the 16S rRNA. In terms of biological role, forms an intersubunit bridge (bridge B4) with the 23S rRNA of the 50S subunit in the ribosome. This is Small ribosomal subunit protein uS15 from Chromobacterium violaceum (strain ATCC 12472 / DSM 30191 / JCM 1249 / CCUG 213 / NBRC 12614 / NCIMB 9131 / NCTC 9757 / MK).